We begin with the raw amino-acid sequence, 103 residues long: Small ribosomal subunit protein uS10 (103 aa).

Belongs to the universal ribosomal protein uS10 family. Part of the 30S ribosomal subunit.

Involved in the binding of tRNA to the ribosomes. The sequence is that of Small ribosomal subunit protein uS10 from Sulfurovum sp. (strain NBC37-1).